A 403-amino-acid chain; its full sequence is Flavohemoprotein (403 aa).

The Globin domain maps to 1-138; the sequence is MLTPEQKAIV…LADLMIGIEK (138 aa). Residue H85 participates in heme b binding. Catalysis depends on charge relay system residues Y95 and E137. The reductase stretch occupies residues 149–403; that stretch reads GGWRDFRPFR…SQSFAPVILG (255 aa). One can recognise an FAD-binding FR-type domain in the interval 152–257; the sequence is RDFRPFRVAR…HVPAGDFVLQ (106 aa). FAD-binding positions include Y190 and 206 to 209; that span reads RQYS. Residue 269-274 participates in NADP(+) binding; it reads GVGITP. 390-393 serves as a coordination point for FAD; sequence TFGP.

The protein belongs to the globin family. Two-domain flavohemoproteins subfamily. It in the C-terminal section; belongs to the flavoprotein pyridine nucleotide cytochrome reductase family. Heme b serves as cofactor. The cofactor is FAD.

The enzyme catalyses 2 nitric oxide + NADPH + 2 O2 = 2 nitrate + NADP(+) + H(+). It catalyses the reaction 2 nitric oxide + NADH + 2 O2 = 2 nitrate + NAD(+) + H(+). The sequence is that of Flavohemoprotein from Deinococcus radiodurans (strain ATCC 13939 / DSM 20539 / JCM 16871 / CCUG 27074 / LMG 4051 / NBRC 15346 / NCIMB 9279 / VKM B-1422 / R1).